The chain runs to 386 residues: Zinc finger protein 385A (386 aa).

The Matrin-type 1 zinc-finger motif lies at 74-98; it reads ISCNICQIRFNSQSQAEAHYKGNRH. Residues 90–193 form a disordered region; the sequence is EAHYKGNRHA…ASLPGGSKEE (104 aa). A compositionally biased stretch (basic and acidic residues) spans 103-121; sequence KGIEAAKTRGREPGVREPG. Positions 145-351 are necessary for binding to ITPR1, CEBPA and p53/TP53 mRNAs; sequence NGLGPAPGSP…AGSPLSLRPA (207 aa). Serine 185 bears the Phosphoserine mark. A Matrin-type 2 zinc finger spans residues 201–225; the sequence is LYCALCKVAVNSLSQLEAHNKGTKH. Threonine 248 is modified (phosphothreonine). Residues 261–285 form a Matrin-type 3 zinc finger; sequence FHCEICNVKVNSEVQLKQHISSRRH. Residues 279 to 309 form a disordered region; the sequence is HISSRRHRDGVAGKPNPLLSRHKKSRGAGEL.

Interacts with ELAVL1; the interaction is indirect, mRNA-dependent and may regulate p53/TP53 expression. Interacts with p53/TP53; the interaction is direct and enhances p53/TP53 transactivation functions on cell-cycle arrest target genes, resulting in growth arrest. Post-translationally, ubiquitinated upon prolonged exposure to genotoxic stress, which leads to proteasomal degradation of ZNF385A and releases p53/TP53 from cell-cycle arrest target gene promoters. As to expression, expressed predominantly in the retina.

The protein resides in the cytoplasm. The protein localises to the nucleus. It is found in the nucleolus. It localises to the cell projection. Its subcellular location is the dendrite. In terms of biological role, RNA-binding protein that affects the localization and the translation of a subset of mRNA. May play a role in adipogenesis through binding to the 3'-UTR of CEBPA mRNA and regulation of its translation. Targets ITPR1 mRNA to dendrites in Purkinje cells, and may regulate its activity-dependent translation. With ELAVL1, binds the 3'-UTR of p53/TP53 mRNAs to control their nuclear export induced by CDKN2A. Hence, may regulate p53/TP53 expression and mediate in part the CDKN2A anti-proliferative activity. May also bind CCNB1 mRNA. Alternatively, may also regulate p53/TP53 activity through direct protein-protein interaction. Interacts with p53/TP53 and promotes cell-cycle arrest over apoptosis enhancing preferentially the DNA binding and transactivation of p53/TP53 on cell-cycle arrest target genes over proapoptotic target genes. May also regulate the ubiquitination and stability of CDKN1A promoting DNA damage-induced cell cycle arrest. Also plays a role in megakaryocytes differentiation. In Homo sapiens (Human), this protein is Zinc finger protein 385A (ZNF385A).